We begin with the raw amino-acid sequence, 49 residues long: Large ribosomal subunit protein bL33A (49 aa).

This sequence belongs to the bacterial ribosomal protein bL33 family.

The chain is Large ribosomal subunit protein bL33A (rpmG1) from Enterococcus faecalis (strain ATCC 700802 / V583).